We begin with the raw amino-acid sequence, 329 residues long: MGSMNKEQAFELLDAFYEAGGNCIDTANSYQNEESEIWIGEWMKSRKLRDQIVIATKFTGDYKKYEVGGGKSANYCGNHKHSLHVSVRDSLRKLQTDWIDILYVHWWDYMSSIEEVMDSLHILVQQGKVLYLGVSDTPAWVVSAANYYATSHGKTPFSIYQGKWNVLNRDFERDIIPMARHFGMALAPWDVMGGGRFQSKKAMEERKKNGEGLRTVSGTSKQTDKEVKISEALAKVAEEHGTESVTAIAIAYVRSKAKNVFPLVGGRKIEHLKQNIEALSIKLTPEQIEYLESIIPFDVGFPTNFIGDDPAVTKKASLLTAMSAQISFD.

The Proton donor role is filled by tyrosine 30. A substrate-binding site is contributed by histidine 105. Residue 190-200 (DVMGGGRFQSK) participates in NADP(+) binding.

The protein belongs to the aldo/keto reductase family. Aldo/keto reductase 2 subfamily.

The chain is Probable aryl-alcohol dehydrogenase AAD4 (AAD4) from Saccharomyces cerevisiae (strain ATCC 204508 / S288c) (Baker's yeast).